Reading from the N-terminus, the 127-residue chain is Large ribosomal subunit protein bL12 (127 aa).

It belongs to the bacterial ribosomal protein bL12 family. Homodimer. Part of the ribosomal stalk of the 50S ribosomal subunit. Forms a multimeric L10(L12)X complex, where L10 forms an elongated spine to which 2 to 4 L12 dimers bind in a sequential fashion. Binds GTP-bound translation factors.

Functionally, forms part of the ribosomal stalk which helps the ribosome interact with GTP-bound translation factors. Is thus essential for accurate translation. The protein is Large ribosomal subunit protein bL12 of Desulforapulum autotrophicum (strain ATCC 43914 / DSM 3382 / VKM B-1955 / HRM2) (Desulfobacterium autotrophicum).